The following is a 216-amino-acid chain: Adenylate kinase (216 aa).

10-15 lines the ATP pocket; it reads GAGKGT. Positions 30–59 are NMP; sequence STGDIFRANIKEKTPLGIEAKRYIDNGQLV. AMP-binding positions include Thr-31, Arg-36, 57 to 59, 85 to 88, and Gln-92; these read QLV and GFPR. Residues 126-163 form an LID region; that stretch reads GRRVCTSCGASYHIRFNPPKIEGKCDICDNELIQRKDD. Position 127 (Arg-127) interacts with ATP. Cys-130 and Cys-133 together coordinate Zn(2+). 136 to 137 provides a ligand contact to ATP; that stretch reads SY. Zn(2+) is bound by residues Cys-150 and Cys-153. Arg-160 and Arg-171 together coordinate AMP. Glu-199 contributes to the ATP binding site.

This sequence belongs to the adenylate kinase family. In terms of assembly, monomer.

Its subcellular location is the cytoplasm. The catalysed reaction is AMP + ATP = 2 ADP. Its pathway is purine metabolism; AMP biosynthesis via salvage pathway; AMP from ADP: step 1/1. In terms of biological role, catalyzes the reversible transfer of the terminal phosphate group between ATP and AMP. Plays an important role in cellular energy homeostasis and in adenine nucleotide metabolism. The protein is Adenylate kinase of Clostridium botulinum (strain 657 / Type Ba4).